A 570-amino-acid polypeptide reads, in one-letter code: Structure-specific endonuclease subunit EME1 (570 aa).

A compositionally biased stretch (low complexity) spans 1-12 (MALKKSSPSLDS). Residues 1–42 (MALKKSSPSLDSGDSDSEELPTFAFLKKEPSSTKRRQPEREE) form a disordered region. Phosphoserine is present on residues Ser12 and Ser15. Over residues 26–42 (LKKEPSSTKRRQPEREE) the composition is skewed to basic and acidic residues. Ser84, Ser85, and Ser87 each carry phosphoserine. Lys103 participates in a covalent cross-link: Glycyl lysine isopeptide (Lys-Gly) (interchain with G-Cter in SUMO2). A phosphoserine mark is found at Ser111 and Ser117. Glycyl lysine isopeptide (Lys-Gly) (interchain with G-Cter in SUMO2) cross-links involve residues Lys136 and Lys141. Position 150 is a phosphothreonine (Thr150). Disordered stretches follow at residues 187–233 (KTNS…ERKN) and 372–400 (AQNPPRRGKQGANKQTKKQQQRQPEASIG). Residues 220-233 (RQKESTLRRQERKN) show a composition bias toward basic and acidic residues. The nuclease-like domain; forms the post-nick DNA binding interface and is involved in DNA recognition and bending stretch occupies residues 250–456 (KHIIVVLDPV…PFKKLRDETT (207 aa)). The helix-hairpin-helix (2HhH); forms the pre-nick DNA binding interface and is involved in DNA recognition and bending stretch occupies residues 476–570 (RGLALVWRRQ…QPHLSLDSAD (95 aa)).

The protein belongs to the EME1/MMS4 family. As to quaternary structure, part of the heterodimeric MUS81-EME1 complex.

It is found in the nucleus. Its subcellular location is the nucleolus. Non-catalytic subunit of the structure-specific, heterodimeric DNA endonuclease MUS81-EME1 which is involved in the maintenance of genome stability. In the complex, EME1 is required for DNA cleavage, participating in DNA recognition and bending. MUS81-EME1 cleaves 3'-flaps and nicked Holliday junctions, and exhibit limited endonuclease activity with 5' flaps and nicked double-stranded DNAs. Active during prometaphase, MUS81-EME1 resolves mitotic recombination intermediates, including Holliday junctions, which form during homologous recombination. The protein is Structure-specific endonuclease subunit EME1 of Homo sapiens (Human).